We begin with the raw amino-acid sequence, 563 residues long: uncharacterized protein (563 aa).

It belongs to the HyuB family.

This is an uncharacterized protein from Methanocaldococcus jannaschii (strain ATCC 43067 / DSM 2661 / JAL-1 / JCM 10045 / NBRC 100440) (Methanococcus jannaschii).